We begin with the raw amino-acid sequence, 346 residues long: Hydroxyproline O-galactosyltransferase HPGT3 (346 aa).

Residues 1 to 10 (MESLPTTVPS) are compositionally biased toward polar residues. The tract at residues 1–21 (MESLPTTVPSKSERRARSSKF) is disordered. Residues 1 to 28 (MESLPTTVPSKSERRARSSKFSQSSSKP) lie on the Cytoplasmic side of the membrane. Residues 29-45 (SVIMAFFSCVAWLYVAG) traverse the membrane as a helical; Signal-anchor for type II membrane protein segment. At 46–346 (RLWQDAENRV…IRQDKVCSVA (301 aa)) the chain is on the lumenal side.

This sequence belongs to the glycosyltransferase 31 family. Mn(2+) serves as cofactor. Expressed in roots, rosette leaves, cauline leaves, stems, flowers and siliques.

The protein localises to the golgi apparatus membrane. Its pathway is protein modification; protein glycosylation. Functionally, possesses hydroxyproline O-galactosyltransferase activity. Transfers galactose from UDP-galactose to hydroxyproline residues in the arabinogalactan proteins (AGPs). Is specific for AGPs containing non-contiguous peptidyl hydroxyproline residues. The addition of galactose onto the peptidyl hydroxyproline residues in AGP core proteins represents the first committed step in arabinogalactan polysaccharide addition. AGP glycans play essential roles in both vegetative and reproductive plant growth. The sequence is that of Hydroxyproline O-galactosyltransferase HPGT3 from Arabidopsis thaliana (Mouse-ear cress).